The following is a 250-amino-acid chain: Probable transcriptional regulatory protein ckrop_1032 (250 aa).

Residues 1 to 22 form a disordered region; that stretch reads MSGHSKWATTKHKKAANDAKRG.

The protein belongs to the TACO1 family.

The protein localises to the cytoplasm. The protein is Probable transcriptional regulatory protein ckrop_1032 of Corynebacterium kroppenstedtii (strain DSM 44385 / JCM 11950 / CIP 105744 / CCUG 35717).